The following is a 578-amino-acid chain: Putative fatty-acid--CoA ligase fadD21 (578 aa).

This sequence belongs to the ATP-dependent AMP-binding enzyme family.

The polypeptide is Putative fatty-acid--CoA ligase fadD21 (fadD21) (Mycobacterium bovis (strain ATCC BAA-935 / AF2122/97)).